Reading from the N-terminus, the 285-residue chain is Phycobilisome 31.6 kDa linker polypeptide, phycocyanin-associated, rod (285 aa).

In terms of domain architecture, PBS-linker spans 1-180; the sequence is MPITTAASRL…LYRGYATSDR (180 aa).

This sequence belongs to the phycobilisome linker protein family.

The protein localises to the cellular thylakoid membrane. Its function is as follows. Rod linker protein, associated with phycocyanin. Linker polypeptides determine the state of aggregation and the location of the disk-shaped phycobiliprotein units within the phycobilisome and modulate their spectroscopic properties in order to mediate a directed and optimal energy transfer. This is Phycobilisome 31.6 kDa linker polypeptide, phycocyanin-associated, rod (cpcI3) from Microchaete diplosiphon (Fremyella diplosiphon).